The primary structure comprises 216 residues: Protein-L-isoaspartate O-methyltransferase (216 aa).

Ser65 is an active-site residue.

The protein belongs to the methyltransferase superfamily. L-isoaspartyl/D-aspartyl protein methyltransferase family.

It localises to the cytoplasm. It catalyses the reaction [protein]-L-isoaspartate + S-adenosyl-L-methionine = [protein]-L-isoaspartate alpha-methyl ester + S-adenosyl-L-homocysteine. Catalyzes the methyl esterification of L-isoaspartyl residues in peptides and proteins that result from spontaneous decomposition of normal L-aspartyl and L-asparaginyl residues. It plays a role in the repair and/or degradation of damaged proteins. In Chlorobium phaeobacteroides (strain DSM 266 / SMG 266 / 2430), this protein is Protein-L-isoaspartate O-methyltransferase.